Consider the following 695-residue polypeptide: Frizzled and smoothened-like protein O (695 aa).

A signal peptide spans 1 to 23 (MKKLNYLLIVSFIFILNLLISKS). Residues 24 to 233 (QVLIDVTAKC…KEYKTKFYSE (210 aa)) lie on the Extracellular side of the membrane. The 146-residue stretch at 28 to 173 (DVTAKCELID…ANEEIQCSGP (146 aa)) folds into the FZ domain. 5 disulfides stabilise this stretch: C33–C96, C42–C89, C80–C125, C114–C170, and C118–C138. Residue N47 is glycosylated (N-linked (GlcNAc...) asparagine). N137 and N178 each carry an N-linked (GlcNAc...) asparagine glycan. The chain crosses the membrane as a helical span at residues 234 to 254 (AILFSFSTACSFYLIFTFGVF). The Cytoplasmic segment spans residues 255–262 (PNKYTNRN). The helical transmembrane segment at 263-283 (WIIVYLGITAICLAISYAVQE) threads the bilayer. Residues 284–307 (ARYGGGDWRCTSDPGRYKSSEDGT) are Extracellular-facing. Residues 308 to 328 (CILGGFFFQIGGLGTILFLSL) form a helical membrane-spanning segment. Residues 329–343 (YSFDMFLTMNMMTNK) are Cytoplasmic-facing. The helical transmembrane segment at 344–364 (YFIQTSVGMWALIIFYALLPI) threads the bilayer. At 365–387 (KHYESSIASAGCWLSNEDNMFWQ) the chain is on the extracellular side. A helical transmembrane segment spans residues 388–408 (YFCFYVPSYVATFFLGVFIIT). Over 409 to 435 (SIYKVFKMTVMFKSIKDKRILLLNIRS) the chain is Cytoplasmic. Residues 436–456 (IIFLIAIMFCVSFSTMYPLYV) traverse the membrane as a helical segment. Topologically, residues 457–500 (TYNGDDFSKSVEVYVTCLYANIPNGNEVCPQIVFPQFSLRYMNA) are extracellular. The helical transmembrane segment at 501-521 (ITMAIIGIVGLIGLGIDPHIL) threads the bilayer. The Cytoplasmic segment spans residues 522–695 (QIYRESIRFK…NIERINSDNV (174 aa)). Residues 545–556 (SPQPLKQGSTTD) are compositionally biased toward polar residues. The segment at 545 to 695 (SPQPLKQGST…NIERINSDNV (151 aa)) is disordered. The span at 593 to 608 (NLSASSESSNNLLNQS) shows a compositional bias: low complexity. Residues 609-625 (TPGNLNINESISSIDTS) are compositionally biased toward polar residues. Low complexity predominate over residues 626 to 686 (NNNNNNNNNN…NNNNNNNNNN (61 aa)). Residues 653 to 691 (NNNNNNNNNNNNNNNNNNNNYSNNNNNNNNNNNNIERIN) are a coiled coil.

This sequence belongs to the G-protein coupled receptor Fz/Smo family.

The protein localises to the membrane. The polypeptide is Frizzled and smoothened-like protein O (fslO) (Dictyostelium discoideum (Social amoeba)).